The following is a 261-amino-acid chain: Dienlactone hydrolase 1 (261 aa).

Active-site residues include C147, D194, and H226.

Belongs to the dienelactone hydrolase family.

Its pathway is xenobiotic degradation. Dienlactone hydrolase; part of the Fusarium detoxification of benzoxazolinone cluster 1 (FDB1) involved in the degradation of benzoxazolinones produced by the host plant. Maize, wheat, and rye produce the 2 benzoxazinone phytoanticipins 2,4-dihy-droxy-7-methoxy-1,4-benzoxazin-3-one (DIMBOA) and 2,4-dihydroxy-1,4-benzoxazin-3-one (DIBOA) that, due to their inherent instability once released, spontaneously degrade to the more stable corresponding benzoxazolinones, 6-methoxy-2-benzoxazolinone (MBOA) and 2-benzoxazolinone (BOA), respectively. The first step in the detoxification of benzoxazolinones involves the hydrolysis of the cyclic ester bond of benzoxazolinones by the FDB1 cluster gamma-lactamase MBL1 to aminophenols. MBL1 is able to convert BOA into 2-aminophenol (2-AP), as well as MBOA into 5-methoxy-2-aminophenol (2-AMP). The FDB2 cluster N-malonyltransferase FDB2/NAT1 then metabolizes aminophenols via N-malonylation to non-toxic malonamic acids. FDB2/NAT1 converts 2-AP into N-(2-hydroxyphenyl) malonamic acid (HPMA) and 2-AMP into N-(2-hydroxy-4-methoxyphenyl) malonamic acid (HMPMA). The duplicated dienlactone hydrolases DLH1 and DLH2 may provide redundant function for hydrolyzing the lactone moiety in the BOA molecule. The roles of the amidases and other enzymes encoded by the 2 FDB clusters have not been identified so far. In Gibberella moniliformis (strain M3125 / FGSC 7600) (Maize ear and stalk rot fungus), this protein is Dienlactone hydrolase 1.